The chain runs to 1487 residues: Chromosome partition protein MukB (1487 aa).

34-41 (GGNGAGKS) provides a ligand contact to ATP. Coiled coils occupy residues 297–458 (GSRE…TNAL), 506–601 (RESQ…LEAI), 637–666 (LEQE…RLAS), 781–806 (RAAR…AKAA), 836–1109 (EQAL…ELRT), and 1210–1266 (VEAI…LSNI). The flexible hinge stretch occupies residues 667 to 784 (PGGSNDPRLK…EIPLFGRAAR (118 aa)).

The protein belongs to the SMC family. MukB subfamily. In terms of assembly, homodimerization via its hinge domain. Binds to DNA via its C-terminal region. Interacts, and probably forms a ternary complex, with MukE and MukF via its C-terminal region. The complex formation is stimulated by calcium or magnesium. Interacts with tubulin-related protein FtsZ.

The protein resides in the cytoplasm. Its subcellular location is the nucleoid. Its function is as follows. Plays a central role in chromosome condensation, segregation and cell cycle progression. Functions as a homodimer, which is essential for chromosome partition. Involved in negative DNA supercoiling in vivo, and by this means organize and compact chromosomes. May achieve or facilitate chromosome segregation by condensation DNA from both sides of a centrally located replisome during cell division. The sequence is that of Chromosome partition protein MukB from Vibrio parahaemolyticus serotype O3:K6 (strain RIMD 2210633).